We begin with the raw amino-acid sequence, 106 residues long: Iron-sulfur cluster assembly protein CyaY (106 aa).

Belongs to the frataxin family.

In terms of biological role, involved in iron-sulfur (Fe-S) cluster assembly. May act as a regulator of Fe-S biogenesis. The sequence is that of Iron-sulfur cluster assembly protein CyaY from Colwellia psychrerythraea (strain 34H / ATCC BAA-681) (Vibrio psychroerythus).